A 389-amino-acid chain; its full sequence is Cuticlin-3 (389 aa).

The N-terminal stretch at methionine 1 to alanine 19 is a signal peptide. Residues isoleucine 20–serine 354 are Extracellular-facing. A ZP domain is found at glutamate 33–glycine 278. The N-linked (GlcNAc...) asparagine glycan is linked to asparagine 284. Residues valine 355–valine 375 form a helical membrane-spanning segment. Residues serine 376–cysteine 389 lie on the Cytoplasmic side of the membrane.

The protein resides in the cell membrane. Functionally, plays a role in alae formation in L1 larvae. The protein is Cuticlin-3 of Caenorhabditis elegans.